The sequence spans 721 residues: uncharacterized protein (721 aa).

Disordered regions lie at residues 196–291 and 370–513; these read TSMT…VGGP and AGIP…AAEQ. Low complexity-rich tracts occupy residues 202 to 224 and 232 to 250; these read SPAG…TSGP and SPFG…SSGP. 2 stretches are compositionally biased toward pro residues: residues 264–283 and 379–389; these read PMPP…PPSA and APTPSPAPIAP. Over residues 419-429 the composition is skewed to low complexity; the sequence is APAGPLPAYGA. Pro residues predominate over residues 435 to 446; it reads VTTPPATPPTPT. Residues 470 to 484 show a composition bias toward polar residues; the sequence is VNKSTAPATTQAQPS. Residues 491–505 show a composition bias toward low complexity; sequence ASATAAATTGAAAGD.

This is an uncharacterized protein from Mycobacterium tuberculosis (strain ATCC 25618 / H37Rv).